A 93-amino-acid chain; its full sequence is MANTKSAIKRIKISERNRIRNRIRLGKIKFYTKQFLKLLEENKIEEAKKVLPEVISAIDKAAQKGTLHKNTAARKKSKLMRLLNQKLSANLSS.

This sequence belongs to the bacterial ribosomal protein bS20 family.

In terms of biological role, binds directly to 16S ribosomal RNA. The polypeptide is Small ribosomal subunit protein bS20 (Dictyoglomus thermophilum (strain ATCC 35947 / DSM 3960 / H-6-12)).